We begin with the raw amino-acid sequence, 418 residues long: Putative ion-transport protein YfeO (418 aa).

Helical transmembrane passes span 10–30 (LLLSLPAVAIGIASSLILIVV), 54–74 (DSPLWIIGVLTLTGIAVGLVI), 99–119 (ALPGLIVALILGLAGGVSLGP), 120–140 (EHPIMTVNIALAVAIGARLLP), 149–169 (ILASAGTIGALFGTPVAAALI), 186–206 (LFAPLMAAAAGALTTGLFFHP), 223–243 (ILSGAIVAAIAIAAGMVAVWC), 258–278 (VLVLGIGGFILGILGVIGGPV), 300–320 (DYFLLAVIKLAALVVAAASGF), 322–342 (GGRIFPAVFVGVALGLMLHEH), 343–363 (VPAVPAAITVSCAILGIVLVV), and 371–391 (LFMAAVVVPNTTLLPLLCIVM).

It belongs to the chloride channel (TC 2.A.49) family.

Its subcellular location is the cell membrane. This Escherichia coli O9:H4 (strain HS) protein is Putative ion-transport protein YfeO.